Here is a 638-residue protein sequence, read N- to C-terminus: Eukaryotic translation initiation factor 2A (638 aa).

WD repeat units lie at residues 287 to 329 (SKEG…FDFG) and 331 to 370 (GPRN…KLAN). The span at 441-450 (KITKAKHEGI) shows a compositional bias: basic and acidic residues. The interval 441 to 593 (KITKAKHEGI…SDKERKIRSV (153 aa)) is disordered. Thr463 carries the phosphothreonine modification. Over residues 492 to 501 (AAAGGVNGNK) the composition is skewed to low complexity. Basic and acidic residues predominate over residues 583 to 593 (ISDKERKIRSV).

This sequence belongs to the WD repeat EIF2A family.

Its function is as follows. Functions in the early steps of protein synthesis of a small number of specific mRNAs. Acts by directing the binding of methionyl-tRNAi to 40S ribosomal subunits. In contrast to the eIF-2 complex, it binds methionyl-tRNAi to 40S subunits in a codon-dependent manner, whereas the eIF-2 complex binds methionyl-tRNAi to 40S subunits in a GTP-dependent manner. This Drosophila melanogaster (Fruit fly) protein is Eukaryotic translation initiation factor 2A.